The sequence spans 584 residues: 2-isopropylmalate synthase (584 aa).

In terms of domain architecture, Pyruvate carboxyltransferase spans 40–314 (PRWCAVDLRD…DPQIDFSDIE (275 aa)). Mg(2+)-binding residues include D49, H253, H255, and N289. Residues 456 to 584 (SRDGSGSTWG…VRDAQEAAQD (129 aa)) are regulatory domain.

This sequence belongs to the alpha-IPM synthase/homocitrate synthase family. LeuA type 2 subfamily. Homodimer. Mg(2+) serves as cofactor.

Its subcellular location is the cytoplasm. It carries out the reaction 3-methyl-2-oxobutanoate + acetyl-CoA + H2O = (2S)-2-isopropylmalate + CoA + H(+). The protein operates within amino-acid biosynthesis; L-leucine biosynthesis; L-leucine from 3-methyl-2-oxobutanoate: step 1/4. Functionally, catalyzes the condensation of the acetyl group of acetyl-CoA with 3-methyl-2-oxobutanoate (2-ketoisovalerate) to form 3-carboxy-3-hydroxy-4-methylpentanoate (2-isopropylmalate). This is 2-isopropylmalate synthase from Kocuria rhizophila (strain ATCC 9341 / DSM 348 / NBRC 103217 / DC2201).